We begin with the raw amino-acid sequence, 272 residues long: sn-1 stearoyl-lipid 9-desaturase (272 aa).

The next 2 helical transmembrane spans lie at 11–31 and 39–59; these read INWV…FAFI and AVGV…TLGF. Positions 60–65 match the Histidine box-1 motif; the sequence is HRLVTH. A Histidine box-2 motif is present at residues 97–101; sequence HRIHH. A helical transmembrane segment spans residues 160 to 180; that stretch reads IALGLLLLYLGGWSFVVWGVF. Positions 230–234 match the Histidine box-3 motif; that stretch reads HHAFQ.

Belongs to the fatty acid desaturase type 2 family. Fe(2+) is required as a cofactor.

The protein localises to the membrane. The enzyme catalyses a 1-octadecanoyl 2-acyl-glycerolipid + 2 reduced [2Fe-2S]-[ferredoxin] + O2 + 2 H(+) = a 1-[(9Z)-octadecenoyl]-2-acyl-glycerolipid + 2 oxidized [2Fe-2S]-[ferredoxin] + 2 H2O. It functions in the pathway lipid metabolism; polyunsaturated fatty acid biosynthesis. Functionally, desaturase involved in fatty acid biosynthesis. Introduces a double bond at carbon 9 of stearoyl groups (18:0) attached to the sn-1 position of the glycerol moiety of membrane glycerolipids. Does not desaturate palmitic acid (16:0), palmitoleic acid (16:1) and cis-vaccenic acid (18:1). This is sn-1 stearoyl-lipid 9-desaturase from Anabaena variabilis.